The following is a 268-amino-acid chain: Homeobox protein CDX-1 (268 aa).

Residues methionine 1–arginine 152 form a disordered region. 2 stretches are compositionally biased toward pro residues: residues threonine 29 to tyrosine 42 and alanine 54 to alanine 67. Residues alanine 73–alanine 91 are compositionally biased toward low complexity. Pro residues predominate over residues phenylalanine 92 to glycine 108. Residues serine 115–proline 128 are compositionally biased toward low complexity. The segment at residues lysine 154–asparagine 213 is a DNA-binding region (homeobox). The segment at tyrosine 157–tyrosine 178 is interaction with DNA. The interval arginine 196–alanine 207 is interaction with 5-mCpG DNA. The interval glutamate 209–proline 268 is disordered. A compositionally biased stretch (low complexity) spans proline 229–leucine 246.

It belongs to the Caudal homeobox family. In terms of tissue distribution, intestinal epithelium.

The protein resides in the nucleus. Functionally, plays a role in transcriptional regulation. Involved in activated KRAS-mediated transcriptional activation of PRKD1 in colorectal cancer (CRC) cells. Binds to the PRKD1 promoter in colorectal cancer (CRC) cells. Could play a role in the terminal differentiation of the intestine. Binds preferentially to methylated DNA. The protein is Homeobox protein CDX-1 (Cdx1) of Mus musculus (Mouse).